A 478-amino-acid polypeptide reads, in one-letter code: ATP synthase subunit beta (478 aa).

Residue 155–162 (GGAGVGKT) coordinates ATP.

This sequence belongs to the ATPase alpha/beta chains family. F-type ATPases have 2 components, CF(1) - the catalytic core - and CF(0) - the membrane proton channel. CF(1) has five subunits: alpha(3), beta(3), gamma(1), delta(1), epsilon(1). CF(0) has three main subunits: a(1), b(2) and c(9-12). The alpha and beta chains form an alternating ring which encloses part of the gamma chain. CF(1) is attached to CF(0) by a central stalk formed by the gamma and epsilon chains, while a peripheral stalk is formed by the delta and b chains.

The protein resides in the cell inner membrane. The catalysed reaction is ATP + H2O + 4 H(+)(in) = ADP + phosphate + 5 H(+)(out). Produces ATP from ADP in the presence of a proton gradient across the membrane. The catalytic sites are hosted primarily by the beta subunits. The polypeptide is ATP synthase subunit beta (Fuscovulum blasticum (Rhodobacter blasticus)).